Here is a 135-residue protein sequence, read N- to C-terminus: Protein NrdI (135 aa).

The protein belongs to the NrdI family.

Functionally, probably involved in ribonucleotide reductase function. This Brucella abortus (strain S19) protein is Protein NrdI.